We begin with the raw amino-acid sequence, 549 residues long: MKNINPTQTAAWQALQKHFDEMKDVTIADLFAKDGDRFSKFSATFDDQMLVDYSKNRITEETLAKLQDLAKECDLAGAIKSMFSGEKINRTENRAVLHVALRNRSNTPILVDGKDVMPEVNAVLEKMKTFSEAIISGEWKGYTGKAITDVVNIGIGGSDLGPYMVTEALRPYKNHLNMHFVSNVDGTHIAEVLKKVNPETTLFLVASKTFTTQETMTNAHSARDWFLKAAGDEKHVAKHFAALSTNAKAVGEFGIDTANMFEFWDWVGGRYSLWSAIGLSIVLSIGFDNFVELLSGAHAMDKHFSTTPAEKNLPVLLALIGIWYNNFFGAETEAILPYDQYMHRFAAYFQQGNMESNGKYVDRNGNVVDYQTGPIIWGEPGTNGQHAFYQLIHQGTKMVPCDFIAPAITHNPLSDHHQKLLSNFFAQTEALAFGKSREVVEQEYRDQGKDPATLDYVVPFKVFEGNRPTNSILLREITPFSLGALIALYEHKIFTQGVILNIFTFDQWGVELGKQLANRILPELKDDKEISSHDSSTNGLINRYKAWRG.

3 positions are modified to N6-acetyllysine: Lys-80, Lys-228, and Lys-234. Glu-355 (proton donor) is an active-site residue. Active-site residues include His-386 and Lys-514.

The protein belongs to the GPI family.

It localises to the cytoplasm. It catalyses the reaction alpha-D-glucose 6-phosphate = beta-D-fructose 6-phosphate. The protein operates within carbohydrate biosynthesis; gluconeogenesis. Its pathway is carbohydrate degradation; glycolysis; D-glyceraldehyde 3-phosphate and glycerone phosphate from D-glucose: step 2/4. Functionally, catalyzes the reversible isomerization of glucose-6-phosphate to fructose-6-phosphate. The sequence is that of Glucose-6-phosphate isomerase from Shigella boydii serotype 4 (strain Sb227).